The primary structure comprises 264 residues: Glutamate racemase (264 aa).

Substrate is bound by residues 10-11 and 42-43; these read DS and YG. The Proton donor/acceptor role is filled by cysteine 73. Residue 74-75 participates in substrate binding; it reads NT. The Proton donor/acceptor role is filled by cysteine 183. 184–185 contributes to the substrate binding site; the sequence is TH.

It belongs to the aspartate/glutamate racemases family.

The catalysed reaction is L-glutamate = D-glutamate. Its pathway is cell wall biogenesis; peptidoglycan biosynthesis. Provides the (R)-glutamate required for cell wall biosynthesis. This Streptococcus pyogenes serotype M6 (strain ATCC BAA-946 / MGAS10394) protein is Glutamate racemase.